The primary structure comprises 698 residues: Ubiquitin-like modifier-activating enzyme ATG7 (698 aa).

Residues 11-13 (FAP) carry the FAP motif motif. Lys-41 participates in a covalent cross-link: Glycyl lysine isopeptide (Lys-Gly) (interchain with G-Cter in ubiquitin). The active-site Glycyl thioester intermediate is the Cys-567. Residue Ser-693 is modified to Phosphoserine.

The protein belongs to the ATG7 family. Homodimer. Interacts with ATG3; this interaction is essential for the transfer of ATG8-like proteins's thioester from ATG7 to ATG3 and plays a role in the conjugation of ATG12 to ATG5. Interacts with ATG12. Interacts with ATG10. Forms intermediate conjugates with GABARAPL1. Forms intermediate conjugates with ATG8-like proteins such as GABARAP, GABARAPL2 or MAP1LC3A. Interacts with EP300 acetyltransferase. Interacts with FOXO1. Acetylated by EP300. In terms of processing, polyubiquitinated on Lys-41 via 'Lys-63'-linked ubiquitin by TRIM32; this modification positiely regulates ATG8 and ATG12 activating enzyme activity leading to initiation of autophagy under metabolic stress. Widely expressed, especially in kidney, liver, lymph nodes and bone marrow.

The protein resides in the cytoplasm. The protein localises to the preautophagosomal structure. E1-like activating enzyme involved in the 2 ubiquitin-like systems required for cytoplasm to vacuole transport (Cvt) and autophagy. Activates ATG12 for its conjugation with ATG5 as well as the ATG8 family proteins for their conjugation with phosphatidylethanolamine. Both systems are needed for the ATG8 association to Cvt vesicles and autophagosomes membranes. Facilitates LC3-I lipidation with phosphatidylethanolamine to form LC3-II which is found on autophagosomal membranes. Required for autophagic death induced by caspase-8 inhibition. Required for mitophagy which contributes to regulate mitochondrial quantity and quality by eliminating the mitochondria to a basal level to fulfill cellular energy requirements and preventing excess ROS production. Modulates p53/TP53 activity to regulate cell cycle and survival during metabolic stress. Also plays a key role in the maintenance of axonal homeostasis, the prevention of axonal degeneration, the maintenance of hematopoietic stem cells, the formation of Paneth cell granules, as well as in adipose differentiation. Plays a role in regulating the liver clock and glucose metabolism by mediating the autophagic degradation of CRY1 (clock repressor) in a time-dependent manner. This chain is Ubiquitin-like modifier-activating enzyme ATG7, found in Mus musculus (Mouse).